A 150-amino-acid chain; its full sequence is UPF0756 membrane protein A1S_2121 (150 aa).

The next 4 helical transmembrane spans lie at 22–42 (SQNA…ITPL), 45–65 (FFPY…TIGV), 83–103 (FISF…WLGG), and 115–135 (VVAG…GVPV).

It belongs to the UPF0756 family.

The protein localises to the cell membrane. This chain is UPF0756 membrane protein A1S_2121, found in Acinetobacter baumannii (strain ATCC 17978 / DSM 105126 / CIP 53.77 / LMG 1025 / NCDC KC755 / 5377).